A 494-amino-acid chain; its full sequence is Apolipoprotein N-acyltransferase (494 aa).

A run of 6 helical transmembrane segments spans residues 16-36, 41-61, 62-82, 133-153, 173-193, and 202-222; these read TVGG…FIWI, LWAS…AILL, SYRW…IAFS, LIWG…FGLG, GGLA…IFAF, and LFAL…ILLA. The region spanning 235 to 461 is the CN hydrolase domain; it reads WQTNIPTRQK…EGVGVIDINV (227 aa). The active-site Proton acceptor is the Glu-276. Lys-325 is a catalytic residue. Cys-373 serves as the catalytic Nucleophile. The chain crosses the membrane as a helical span at residues 468 to 488; that stretch reads YVRWGEIPLISSLLIVLCFIA.

Belongs to the CN hydrolase family. Apolipoprotein N-acyltransferase subfamily.

It is found in the cell inner membrane. It carries out the reaction N-terminal S-1,2-diacyl-sn-glyceryl-L-cysteinyl-[lipoprotein] + a glycerophospholipid = N-acyl-S-1,2-diacyl-sn-glyceryl-L-cysteinyl-[lipoprotein] + a 2-acyl-sn-glycero-3-phospholipid + H(+). It functions in the pathway protein modification; lipoprotein biosynthesis (N-acyl transfer). In terms of biological role, catalyzes the phospholipid dependent N-acylation of the N-terminal cysteine of apolipoprotein, the last step in lipoprotein maturation. The chain is Apolipoprotein N-acyltransferase from Prochlorococcus marinus (strain SARG / CCMP1375 / SS120).